The sequence spans 976 residues: Ephrin type-A receptor 1 (976 aa).

The signal sequence occupies residues 1-25 (MERRWPLGLGLVLLLCAPLPPGARA). Over 26 to 547 (KEVTLMDTSK…PVSRGLTGGE (522 aa)) the chain is Extracellular. The region spanning 27–209 (EVTLMDTSKA…FYQRCPETLN (183 aa)) is the Eph LBD domain. 2 Fibronectin type-III domains span residues 332–445 (PPSA…MGHA) and 447–538 (SLSG…TSPP). A glycan (N-linked (GlcNAc...) asparagine) is linked at asparagine 414. Residues 548–568 (IVAVIFGLLLGAALLLGILVF) form a helical membrane-spanning segment. The Cytoplasmic segment spans residues 569–976 (RSRRAQRQRQ…ILCSIQGFKD (408 aa)). Phosphotyrosine; by autocatalysis occurs at positions 599 and 605. The region spanning 624–884 (LMVDTVIGEG…KLQAHLEQLL (261 aa)) is the Protein kinase domain. Residues 630 to 638 (IGEGEFGEV) and lysine 656 each bind ATP. Aspartate 749 acts as the Proton acceptor in catalysis. At tyrosine 781 the chain carries Phosphotyrosine; by autocatalysis. A phosphoserine mark is found at serine 906 and serine 910. Residues 913 to 976 (IPYRTVSEWL…ILCSIQGFKD (64 aa)) enclose the SAM domain. Tyrosine 930 bears the Phosphotyrosine; by autocatalysis mark. The PDZ-binding signature appears at 974–976 (FKD).

Belongs to the protein kinase superfamily. Tyr protein kinase family. Ephrin receptor subfamily. As to quaternary structure, homodimer. Forms a signaling complex with LCK; PTK2B/PYK2 and PI3-kinase upon activation by EFNA1; regulates T-lymphocytes migration. Interacts (via SAM domain) with ILK (via ANK repeats); stimulated by EFNA1 but independent of the kinase activity of EPHA1. Interacts (kinase activity-dependent) with PTK2/FAK1. In terms of processing, phosphorylated. Autophosphorylation is stimulated by its ligand EFNA1. Post-translationally, ubiquitinated. In terms of tissue distribution, overexpressed in several carcinomas.

Its subcellular location is the cell membrane. It catalyses the reaction L-tyrosyl-[protein] + ATP = O-phospho-L-tyrosyl-[protein] + ADP + H(+). Its function is as follows. Receptor tyrosine kinase which binds promiscuously membrane-bound ephrin-A family ligands residing on adjacent cells, leading to contact-dependent bidirectional signaling into neighboring cells. The signaling pathway downstream of the receptor is referred to as forward signaling while the signaling pathway downstream of the ephrin ligand is referred to as reverse signaling. Binds with a low affinity EFNA3 and EFNA4 and with a high affinity to EFNA1 which most probably constitutes its cognate/functional ligand. Upon activation by EFNA1 induces cell attachment to the extracellular matrix inhibiting cell spreading and motility through regulation of ILK and downstream RHOA and RAC. Also plays a role in angiogenesis and regulates cell proliferation. May play a role in apoptosis. This is Ephrin type-A receptor 1 (EPHA1) from Homo sapiens (Human).